Consider the following 192-residue polypeptide: NADH-quinone oxidoreductase subunit B (192 aa).

[4Fe-4S] cluster contacts are provided by cysteine 71, cysteine 72, cysteine 136, and cysteine 166.

It belongs to the complex I 20 kDa subunit family. NDH-1 is composed of 14 different subunits. Subunits NuoB, C, D, E, F, and G constitute the peripheral sector of the complex. The cofactor is [4Fe-4S] cluster.

The protein localises to the cell inner membrane. It carries out the reaction a quinone + NADH + 5 H(+)(in) = a quinol + NAD(+) + 4 H(+)(out). In terms of biological role, NDH-1 shuttles electrons from NADH, via FMN and iron-sulfur (Fe-S) centers, to quinones in the respiratory chain. The immediate electron acceptor for the enzyme in this species is believed to be ubiquinone. Couples the redox reaction to proton translocation (for every two electrons transferred, four hydrogen ions are translocated across the cytoplasmic membrane), and thus conserves the redox energy in a proton gradient. The polypeptide is NADH-quinone oxidoreductase subunit B (Sinorhizobium medicae (strain WSM419) (Ensifer medicae)).